The following is a 216-amino-acid chain: Superoxide dismutase [Mn], mitochondrial (216 aa).

The transit peptide at methionine 1–glycine 18 directs the protein to the mitochondrion. Mn(2+) contacts are provided by histidine 44, histidine 92, aspartate 176, and histidine 180.

Belongs to the iron/manganese superoxide dismutase family. Mn(2+) serves as cofactor.

It is found in the mitochondrion matrix. The enzyme catalyses 2 superoxide + 2 H(+) = H2O2 + O2. Destroys superoxide anion radicals which are normally produced within the cells and which are toxic to biological systems. This is Superoxide dismutase [Mn], mitochondrial (Sod2) from Glossina morsitans morsitans (Savannah tsetse fly).